Consider the following 284-residue polypeptide: Small ribosomal subunit protein uS5z (284 aa).

The span at 1-19 (MAERGGEGGAERGGDRGDF) shows a compositional bias: basic and acidic residues. A disordered region spans residues 1–51 (MAERGGEGGAERGGDRGDFGRGFGGGRGGGRGRDRGPRGRGRRGGRASEET). Gly residues predominate over residues 20-29 (GRGFGGGRGG). The region spanning 95–158 (LKDEVMKIMP…ILAKLSVVPV (64 aa)) is the S5 DRBM domain.

Belongs to the universal ribosomal protein uS5 family.

The polypeptide is Small ribosomal subunit protein uS5z (RPS2A) (Arabidopsis thaliana (Mouse-ear cress)).